The primary structure comprises 234 residues: Ubiquitin carboxyl-terminal hydrolase 3 (234 aa).

Positions 12-232 constitute a UCH catalytic domain; the sequence is RWLPLESNPD…LNFNLIAISK (221 aa). Cys101 acts as the Nucleophile in catalysis. Residue His172 is the Proton donor of the active site.

The protein belongs to the peptidase C12 family.

It carries out the reaction Thiol-dependent hydrolysis of ester, thioester, amide, peptide and isopeptide bonds formed by the C-terminal Gly of ubiquitin (a 76-residue protein attached to proteins as an intracellular targeting signal).. This Arabidopsis thaliana (Mouse-ear cress) protein is Ubiquitin carboxyl-terminal hydrolase 3.